A 106-amino-acid chain; its full sequence is Cytochrome c oxidase assembly protein COX16 homolog, mitochondrial (106 aa).

Topologically, residues 1–15 (MIAPAVLRALRKNKT) are mitochondrial matrix. The helical transmembrane segment at 16-33 (LRYGVPMLLLVVGGSFGL) threads the bilayer. Residues 34–106 (REFSQIRYDA…NPETLKPKTT (73 aa)) are Mitochondrial intermembrane-facing. The interval 81-106 (IRGPRPWEDPQLLQGRNPETLKPKTT) is disordered.

This sequence belongs to the COX16 family. As to quaternary structure, associates with the MITRAC complex. Interacts with MT-CO2/COX; specifically interacts with newly synthesized MT-CO2/COX. Interacts with SCO1, SCO2 and COA6.

It is found in the mitochondrion inner membrane. In terms of biological role, required for the assembly of the mitochondrial respiratory chain complex IV (CIV), also known as cytochrome c oxidase. Promotes the insertion of copper into the active site of cytochrome c oxidase subunit II (MT-CO2/COX2). Interacts specifically with newly synthesized MT-CO2/COX and its copper center-forming metallochaperones SCO1, SCO2 and COA6. Probably facilitates MT-CO2/COX2 association with the MITRAC assembly intermediate containing MT-CO1/COX1, thereby participating in merging the MT-CO1/COX1 and MT-CO2/COX2 assembly lines. The polypeptide is Cytochrome c oxidase assembly protein COX16 homolog, mitochondrial (Mus musculus (Mouse)).